The primary structure comprises 215 residues: Cytochrome b6 (215 aa).

A helical transmembrane segment spans residues 32 to 52; that stretch reads IFYCLGGITLTCFLVQVATGF. A heme c-binding site is contributed by cysteine 35. Histidine 86 and histidine 100 together coordinate heme b. The next 3 membrane-spanning stretches (helical) occupy residues 90–110, 116–136, and 186–206; these read ASMM…TGGF, LTWV…VTGY, and LHTF…FPMI. 2 residues coordinate heme b: histidine 187 and histidine 202.

Belongs to the cytochrome b family. PetB subfamily. In terms of assembly, the 4 large subunits of the cytochrome b6-f complex are cytochrome b6, subunit IV (17 kDa polypeptide, PetD), cytochrome f and the Rieske protein, while the 4 small subunits are PetG, PetL, PetM and PetN. The complex functions as a dimer. Requires heme b as cofactor. It depends on heme c as a cofactor.

It localises to the plastid. It is found in the chloroplast thylakoid membrane. Its function is as follows. Component of the cytochrome b6-f complex, which mediates electron transfer between photosystem II (PSII) and photosystem I (PSI), cyclic electron flow around PSI, and state transitions. This is Cytochrome b6 from Daucus carota (Wild carrot).